Reading from the N-terminus, the 218-residue chain is Leucine-rich repeat protein 2 (218 aa).

The N-terminal stretch at 1–27 is a signal peptide; it reads MVAQNSRRELLAASLILTLALIRLTEA. LRR repeat units follow at residues 69 to 93, 94 to 117, 119 to 141, 142 to 165, and 167 to 190; these read HHQVTRLDLGNSNLSGHLVPELGKL, EHLQYLELYKNEIQGTIPSELGNL, SLISLDLYNNNLTGKIPSSLGKL, KSLVFLRLNENRLTGPIPRELTVI, and SLKVVDVSGNDLCGTIPVEGPFEH.

In terms of biological role, probably involved in plant defense response. This chain is Leucine-rich repeat protein 2, found in Arabidopsis thaliana (Mouse-ear cress).